A 357-amino-acid polypeptide reads, in one-letter code: Alanine racemase (357 aa).

K33 acts as the Proton acceptor; specific for D-alanine in catalysis. At K33 the chain carries N6-(pyridoxal phosphate)lysine. Residue R129 participates in substrate binding. Y253 acts as the Proton acceptor; specific for L-alanine in catalysis. M301 serves as a coordination point for substrate.

This sequence belongs to the alanine racemase family. Requires pyridoxal 5'-phosphate as cofactor.

The enzyme catalyses L-alanine = D-alanine. It participates in amino-acid biosynthesis; D-alanine biosynthesis; D-alanine from L-alanine: step 1/1. Catalyzes the interconversion of L-alanine and D-alanine. May also act on other amino acids. This chain is Alanine racemase (alr), found in Pseudomonas savastanoi pv. phaseolicola (strain 1448A / Race 6) (Pseudomonas syringae pv. phaseolicola (strain 1448A / Race 6)).